The following is a 415-amino-acid chain: Homoserine O-succinyltransferase (415 aa).

Positions 1–26 (MTSPALTAASVTPSRNTTSPDTTSHR) are enriched in polar residues. The disordered stretch occupies residues 1 to 27 (MTSPALTAASVTPSRNTTSPDTTSHRP). The region spanning 71–386 (NAVLICHALN…HGHDAFLLED (316 aa)) is the AB hydrolase-1 domain. Residue Ser-177 is the Nucleophile of the active site. Arg-247 provides a ligand contact to substrate. Catalysis depends on residues Asp-346 and His-379. Asp-380 is a substrate binding site.

This sequence belongs to the AB hydrolase superfamily. MetX family. In terms of assembly, homodimer.

It is found in the cytoplasm. It catalyses the reaction L-homoserine + succinyl-CoA = O-succinyl-L-homoserine + CoA. Its pathway is amino-acid biosynthesis; L-methionine biosynthesis via de novo pathway; O-succinyl-L-homoserine from L-homoserine: step 1/1. Transfers a succinyl group from succinyl-CoA to L-homoserine, forming succinyl-L-homoserine. In Bordetella avium (strain 197N), this protein is Homoserine O-succinyltransferase.